The sequence spans 305 residues: Imidazoleglycerol-phosphate dehydratase (305 aa).

Belongs to the imidazoleglycerol-phosphate dehydratase family.

Its subcellular location is the cytoplasm. The catalysed reaction is D-erythro-1-(imidazol-4-yl)glycerol 3-phosphate = 3-(imidazol-4-yl)-2-oxopropyl phosphate + H2O. It functions in the pathway amino-acid biosynthesis; L-histidine biosynthesis; L-histidine from 5-phospho-alpha-D-ribose 1-diphosphate: step 6/9. In Neisseria meningitidis serogroup C (strain 053442), this protein is Imidazoleglycerol-phosphate dehydratase.